A 358-amino-acid polypeptide reads, in one-letter code: Methylthioribose-1-phosphate isomerase (358 aa).

Substrate-binding positions include R54–A56, R96, and Q205. Residue D246 is the Proton donor of the active site. N256–K257 is a binding site for substrate.

Belongs to the eIF-2B alpha/beta/delta subunits family. MtnA subfamily.

It catalyses the reaction 5-(methylsulfanyl)-alpha-D-ribose 1-phosphate = 5-(methylsulfanyl)-D-ribulose 1-phosphate. Its pathway is amino-acid biosynthesis; L-methionine biosynthesis via salvage pathway; L-methionine from S-methyl-5-thio-alpha-D-ribose 1-phosphate: step 1/6. Catalyzes the interconversion of methylthioribose-1-phosphate (MTR-1-P) into methylthioribulose-1-phosphate (MTRu-1-P). The chain is Methylthioribose-1-phosphate isomerase from Pseudomonas fluorescens (strain Pf0-1).